The chain runs to 187 residues: Oligoribonuclease (187 aa).

One can recognise an Exonuclease domain in the interval 7–170 (LCWLDMEMTG…DDILESIEEM (164 aa)). Residue tyrosine 128 is part of the active site.

It belongs to the oligoribonuclease family.

It is found in the cytoplasm. Its function is as follows. 3'-to-5' exoribonuclease specific for small oligoribonucleotides. The sequence is that of Oligoribonuclease from Neisseria meningitidis serogroup A / serotype 4A (strain DSM 15465 / Z2491).